Here is a 190-residue protein sequence, read N- to C-terminus: Potassium-transporting ATPase KdpC subunit (190 aa).

The helical transmembrane segment at 10–30 (TFIFLLLITGGVYPLLTTALG) threads the bilayer.

Belongs to the KdpC family. The system is composed of three essential subunits: KdpA, KdpB and KdpC.

Its subcellular location is the cell inner membrane. Functionally, part of the high-affinity ATP-driven potassium transport (or Kdp) system, which catalyzes the hydrolysis of ATP coupled with the electrogenic transport of potassium into the cytoplasm. This subunit acts as a catalytic chaperone that increases the ATP-binding affinity of the ATP-hydrolyzing subunit KdpB by the formation of a transient KdpB/KdpC/ATP ternary complex. The chain is Potassium-transporting ATPase KdpC subunit from Escherichia coli O157:H7.